The following is a 373-amino-acid chain: Queuine tRNA-ribosyltransferase (373 aa).

D89 acts as the Proton acceptor in catalysis. Substrate contacts are provided by residues D89–F93, D143, Q185, and G212. The interval G243 to D249 is RNA binding. The active-site Nucleophile is the D262. The RNA binding; important for wobble base 34 recognition stretch occupies residues T267–R271. C300, C302, C305, and H331 together coordinate Zn(2+).

The protein belongs to the queuine tRNA-ribosyltransferase family. Homodimer. Within each dimer, one monomer is responsible for RNA recognition and catalysis, while the other monomer binds to the replacement base PreQ1. Requires Zn(2+) as cofactor.

The catalysed reaction is 7-aminomethyl-7-carbaguanine + guanosine(34) in tRNA = 7-aminomethyl-7-carbaguanosine(34) in tRNA + guanine. Its pathway is tRNA modification; tRNA-queuosine biosynthesis. Functionally, catalyzes the base-exchange of a guanine (G) residue with the queuine precursor 7-aminomethyl-7-deazaguanine (PreQ1) at position 34 (anticodon wobble position) in tRNAs with GU(N) anticodons (tRNA-Asp, -Asn, -His and -Tyr). Catalysis occurs through a double-displacement mechanism. The nucleophile active site attacks the C1' of nucleotide 34 to detach the guanine base from the RNA, forming a covalent enzyme-RNA intermediate. The proton acceptor active site deprotonates the incoming PreQ1, allowing a nucleophilic attack on the C1' of the ribose to form the product. After dissociation, two additional enzymatic reactions on the tRNA convert PreQ1 to queuine (Q), resulting in the hypermodified nucleoside queuosine (7-(((4,5-cis-dihydroxy-2-cyclopenten-1-yl)amino)methyl)-7-deazaguanosine). This is Queuine tRNA-ribosyltransferase from Marinobacter nauticus (strain ATCC 700491 / DSM 11845 / VT8) (Marinobacter aquaeolei).